The sequence spans 366 residues: Mitochondrial substrate carrier family protein H (366 aa).

A compositionally biased stretch (low complexity) spans 1-25; it reads MLSNSVNNNNNNNNINNSNSNNNDS. Residues 1–26 are disordered; that stretch reads MLSNSVNNNNNNNNINNSNSNNNDSN. Solcar repeat units follow at residues 29 to 121, 132 to 243, and 259 to 360; these read KNVK…LKEY, NIYT…LKNK, and SPFF…IKQS. 6 helical membrane passes run 35–55, 96–112, 133–151, 175–192, 262–282, and 340–357; these read MVAS…LDVV, GVTP…TIYF, IYTV…SASV, VAMA…IPLS, FINF…TTPI, and VAKV…FEYI.

It belongs to the mitochondrial carrier (TC 2.A.29) family.

The protein resides in the mitochondrion inner membrane. Its function is as follows. Mitochondrial transporter required for glutathione import into mitochondria. The protein is Mitochondrial substrate carrier family protein H of Dictyostelium discoideum (Social amoeba).